The following is a 421-amino-acid chain: ATP-dependent RNA helicase RhlB (421 aa).

Residues 9–37 (QKFSDFALHPKVVEALEKKGFHNCTPIQA) carry the Q motif motif. In terms of domain architecture, Helicase ATP-binding spans 40 to 219 (LPLTLAGRDV…FEQMNNAEYI (180 aa)). 53 to 60 (AQTGTGKT) lines the ATP pocket. The DEAD box motif lies at 165-168 (DEAD). The Helicase C-terminal domain occupies 245-390 (RLLQTLIEEE…VSKYNPDALM (146 aa)). Residues 392 to 421 (DLPKPLRLTRPRTGNGPRRTGTPRNRRRSG) are disordered. A compositionally biased stretch (low complexity) spans 402–414 (PRTGNGPRRTGTP).

Belongs to the DEAD box helicase family. RhlB subfamily. Component of the RNA degradosome, which is a multiprotein complex involved in RNA processing and mRNA degradation.

Its subcellular location is the cytoplasm. It carries out the reaction ATP + H2O = ADP + phosphate + H(+). DEAD-box RNA helicase involved in RNA degradation. Has RNA-dependent ATPase activity and unwinds double-stranded RNA. This chain is ATP-dependent RNA helicase RhlB, found in Escherichia coli O7:K1 (strain IAI39 / ExPEC).